Here is a 225-residue protein sequence, read N- to C-terminus: Octanoyltransferase (225 aa).

The region spanning 31–214 (ENTCDEVWLV…ELTTLLDYTD (184 aa)) is the BPL/LPL catalytic domain. Residues 70–77 (RGGQVTYH), 137–139 (SLG), and 150–152 (GLA) contribute to the substrate site. Cysteine 168 (acyl-thioester intermediate) is an active-site residue.

The protein belongs to the LipB family.

The protein resides in the cytoplasm. The catalysed reaction is octanoyl-[ACP] + L-lysyl-[protein] = N(6)-octanoyl-L-lysyl-[protein] + holo-[ACP] + H(+). The protein operates within protein modification; protein lipoylation via endogenous pathway; protein N(6)-(lipoyl)lysine from octanoyl-[acyl-carrier-protein]: step 1/2. Catalyzes the transfer of endogenously produced octanoic acid from octanoyl-acyl-carrier-protein onto the lipoyl domains of lipoate-dependent enzymes. Lipoyl-ACP can also act as a substrate although octanoyl-ACP is likely to be the physiological substrate. In Aliivibrio fischeri (strain ATCC 700601 / ES114) (Vibrio fischeri), this protein is Octanoyltransferase.